A 314-amino-acid chain; its full sequence is Ferrochelatase (314 aa).

Positions 188 and 269 each coordinate Fe cation.

The protein belongs to the ferrochelatase family.

The protein localises to the cytoplasm. It catalyses the reaction heme b + 2 H(+) = protoporphyrin IX + Fe(2+). It functions in the pathway porphyrin-containing compound metabolism; protoheme biosynthesis; protoheme from protoporphyrin-IX: step 1/1. Its function is as follows. Catalyzes the ferrous insertion into protoporphyrin IX. The polypeptide is Ferrochelatase (Campylobacter fetus subsp. fetus (strain 82-40)).